The primary structure comprises 352 residues: Protein RecA (352 aa).

ATP is bound at residue 67-74 (GPESSGKT).

Belongs to the RecA family.

Its subcellular location is the cytoplasm. Can catalyze the hydrolysis of ATP in the presence of single-stranded DNA, the ATP-dependent uptake of single-stranded DNA by duplex DNA, and the ATP-dependent hybridization of homologous single-stranded DNAs. It interacts with LexA causing its activation and leading to its autocatalytic cleavage. This Chlamydia trachomatis serovar L2 (strain ATCC VR-902B / DSM 19102 / 434/Bu) protein is Protein RecA.